A 471-amino-acid chain; its full sequence is Argininosuccinate lyase (471 aa).

Belongs to the lyase 1 family. Argininosuccinate lyase subfamily.

It is found in the cytoplasm. It catalyses the reaction 2-(N(omega)-L-arginino)succinate = fumarate + L-arginine. It functions in the pathway amino-acid biosynthesis; L-arginine biosynthesis; L-arginine from L-ornithine and carbamoyl phosphate: step 3/3. This Cereibacter sphaeroides (strain ATCC 17025 / ATH 2.4.3) (Rhodobacter sphaeroides) protein is Argininosuccinate lyase.